Consider the following 249-residue polypeptide: Indole-3-glycerol phosphate synthase (249 aa).

This sequence belongs to the TrpC family.

It catalyses the reaction 1-(2-carboxyphenylamino)-1-deoxy-D-ribulose 5-phosphate + H(+) = (1S,2R)-1-C-(indol-3-yl)glycerol 3-phosphate + CO2 + H2O. It functions in the pathway amino-acid biosynthesis; L-tryptophan biosynthesis; L-tryptophan from chorismate: step 4/5. This chain is Indole-3-glycerol phosphate synthase, found in Pyrobaculum neutrophilum (strain DSM 2338 / JCM 9278 / NBRC 100436 / V24Sta) (Thermoproteus neutrophilus).